Consider the following 217-residue polypeptide: Protein-L-isoaspartate O-methyltransferase (217 aa).

Residue Ser-65 is part of the active site.

Belongs to the methyltransferase superfamily. L-isoaspartyl/D-aspartyl protein methyltransferase family.

The protein resides in the cytoplasm. It catalyses the reaction [protein]-L-isoaspartate + S-adenosyl-L-methionine = [protein]-L-isoaspartate alpha-methyl ester + S-adenosyl-L-homocysteine. In terms of biological role, catalyzes the methyl esterification of L-isoaspartyl residues in peptides and proteins that result from spontaneous decomposition of normal L-aspartyl and L-asparaginyl residues. It plays a role in the repair and/or degradation of damaged proteins. In Methanoregula boonei (strain DSM 21154 / JCM 14090 / 6A8), this protein is Protein-L-isoaspartate O-methyltransferase.